The chain runs to 294 residues: Elongation factor Ts (294 aa).

The tract at residues 81–84 is involved in Mg(2+) ion dislocation from EF-Tu; the sequence is TDFV.

It belongs to the EF-Ts family.

The protein resides in the cytoplasm. In terms of biological role, associates with the EF-Tu.GDP complex and induces the exchange of GDP to GTP. It remains bound to the aminoacyl-tRNA.EF-Tu.GTP complex up to the GTP hydrolysis stage on the ribosome. The protein is Elongation factor Ts of Lawsonia intracellularis (strain PHE/MN1-00).